The primary structure comprises 103 residues: NADH-quinone oxidoreductase subunit K (103 aa).

The next 3 membrane-spanning stretches (helical) occupy residues 6 to 26 (LSHF…GIFL), 32 to 52 (LVLL…FVAF), and 63 to 83 (IFVF…LAIL).

Belongs to the complex I subunit 4L family. NDH-1 is composed of 14 different subunits. Subunits NuoA, H, J, K, L, M, N constitute the membrane sector of the complex.

It localises to the cell inner membrane. The enzyme catalyses a quinone + NADH + 5 H(+)(in) = a quinol + NAD(+) + 4 H(+)(out). Functionally, NDH-1 shuttles electrons from NADH, via FMN and iron-sulfur (Fe-S) centers, to quinones in the respiratory chain. The immediate electron acceptor for the enzyme in this species is believed to be ubiquinone. Couples the redox reaction to proton translocation (for every two electrons transferred, four hydrogen ions are translocated across the cytoplasmic membrane), and thus conserves the redox energy in a proton gradient. This chain is NADH-quinone oxidoreductase subunit K, found in Dechloromonas aromatica (strain RCB).